Consider the following 596-residue polypeptide: Pentatricopeptide repeat-containing protein At1g50270 (596 aa).

12 PPR repeats span residues 66-102 (SIQL…GVIP), 103-136 (SRHT…GLDS), 137-167 (DPFV…AEDK), 168-202 (DVVT…GVAA), 203-237 (NEMT…GRVK), 239-269 (DVFI…MPSR), 270-304 (NVVT…DVAP), 305-339 (NEKT…SIEI), 340-370 (NTTA…LHEK), 371-405 (NVYT…HVSP), 406-436 (NEVT…MKGR), and 442-472 (KADH…MPME). The tract at residues 477-552 (VWGALFGSCL…SPGFSWIEVK (76 aa)) is type E motif. Residues 553-584 (GKLCEFIAFDDKKPLESDDLYKTLDTVGVQMR) are type E(+) motif.

Belongs to the PPR family. PCMP-E subfamily.

This Arabidopsis thaliana (Mouse-ear cress) protein is Pentatricopeptide repeat-containing protein At1g50270 (PCMP-E42).